The primary structure comprises 457 residues: BAG family molecular chaperone regulator 4 (457 aa).

Low complexity predominate over residues 1–20 (MSALRRSGYGPSDGPSYGRY). The tract at residues 1–104 (MSALRRSGYG…PYPGYNSNYW (104 aa)) is disordered. Residue Ser-7 is modified to Phosphoserine. Over residues 31 to 48 (HVPPPLYPPLRPEPPQPP) the composition is skewed to pro residues. Omega-N-methylarginine occurs at positions 41, 54, 108, and 185. 2 disordered regions span residues 128–335 (LNSY…SDLL) and 348–374 (YGNA…SSDE). Polar residues predominate over residues 160–193 (YTQSNYSTEVPNTYRSPGNSPTPMSRWMYSQQDC). A compositionally biased stretch (low complexity) spans 255–268 (PWPSAAPSAPSAGS). Positions 284–295 (PQPPPSPPPQQP) are enriched in pro residues. 2 stretches are compositionally biased toward polar residues: residues 326–335 (AVNNDNSDLL) and 348–365 (YGNA…SNNL). Positions 379-456 (SIKKIIHVLE…AILEKLEKKG (78 aa)) constitute a BAG domain.

As to quaternary structure, binds to the ATPase domain of HSP/HSC70 chaperones. Binds to the death domain of TNFRSF12. Binds to the death domain of TNFRSF1A in the absence of TNF and thereby prevents binding of adapter molecules such as TRADD or TRAF2. Interacts with PRKN.

It localises to the cytoplasm. In terms of biological role, inhibits the chaperone activity of HSP70/HSC70 by promoting substrate release. Prevents constitutive TNFRSF1A signaling. Negative regulator of PRKN translocation to damaged mitochondria. The chain is BAG family molecular chaperone regulator 4 (Bag4) from Mus musculus (Mouse).